The chain runs to 67 residues: Conotoxin LeDr192 (67 aa).

An N-terminal signal peptide occupies residues 1–19 (MRCFPVFIILLLLIASAPC). A propeptide spanning residues 20-49 (FDARTKTDDDVPLSPLRDNLKRTIRTRLNI) is cleaved from the precursor. At Thr-65 the chain carries Threonine amide.

Belongs to the conotoxin T superfamily. Contains 2 disulfide bonds that can be either 'C1-C3, C2-C4' or 'C1-C4, C2-C3', since these disulfide connectivities have been observed for conotoxins with cysteine framework V (for examples, see AC P0DQQ7 and AC P81755). Expressed by the venom duct.

It localises to the secreted. The sequence is that of Conotoxin LeDr192 from Conus litteratus (Lettered cone).